The primary structure comprises 416 residues: Polyadenylation and cleavage factor homolog 1 (416 aa).

The span at 1–17 (MASNGSFSAQRNANART) shows a compositional bias: polar residues. Positions 1–80 (MASNGSFSAQ…NNNNVSRVSS (80 aa)) are disordered. Low complexity predominate over residues 70–80 (SNNNNVSRVSS). The stretch at 199-220 (KELTDLLSLLNNEKEKKTLEAS) forms a coiled coil. Residues 254-276 (RQCSSCGLRFKCQEEHSKHMDWH) form a C2H2-type zinc finger.

Forms a complex with cleavage and polyadenylation specificity factor (CPSF) subunits CLPS3, CLPS5, CPSF30, PCFS4, PCFS5, CSTF77 and FIPS3.

It localises to the nucleus. The polypeptide is Polyadenylation and cleavage factor homolog 1 (Arabidopsis thaliana (Mouse-ear cress)).